The following is a 66-amino-acid chain: Conotoxin PnMLCL-01 (66 aa).

Residues 1–19 (MLCLPVFIILLLLASPAAS) form the signal peptide. Positions 20–45 (NPLEKRIQSDLIRAALEDADTKNDPR) are excised as a propeptide. Cysteine amide is present on Cys-63.

It belongs to the conotoxin T superfamily. Post-translationally, contains 2 disulfide bonds that can be either 'C1-C3, C2-C4' or 'C1-C4, C2-C3', since these disulfide connectivities have been observed for conotoxins with cysteine framework V (for examples, see AC P0DQQ7 and AC P81755). Expressed by the venom duct.

The protein resides in the secreted. The protein is Conotoxin PnMLCL-01 of Conus pennaceus (Feathered cone).